We begin with the raw amino-acid sequence, 347 residues long: NADH-ubiquinone oxidoreductase chain 2 (347 aa).

11 helical membrane passes run 2–22 (SPYVLTIMSLSLLLGTTMTLI), 25–45 (HWLTAWMGLEINTLAVIPLMT), 56–76 (AIKYFMIQATASMIILFSAIF), 96–116 (FMMTIALAMKLGLAPFHFWVP), 122–142 (IPLLSGMILLTWQKIAPISIF), 149–169 (LNMSLLMILSITSTLLGGWGG), 178–197 (ILAYSSIAHMGWMTIIIMIY), 202–219 (ILNLILYLASTITMFMVL), 241–261 (MIIITLTLLSLGGLPPLTGFM), 278–298 (LAMMLALSTLLNLFFYMRIIY), and 323–343 (ILPIPTLTIISSLLLPMTPMF).

It belongs to the complex I subunit 2 family. As to quaternary structure, core subunit of respiratory chain NADH dehydrogenase (Complex I) which is composed of 45 different subunits. Interacts with TMEM242.

The protein localises to the mitochondrion inner membrane. It carries out the reaction a ubiquinone + NADH + 5 H(+)(in) = a ubiquinol + NAD(+) + 4 H(+)(out). Core subunit of the mitochondrial membrane respiratory chain NADH dehydrogenase (Complex I) which catalyzes electron transfer from NADH through the respiratory chain, using ubiquinone as an electron acceptor. Essential for the catalytic activity and assembly of complex I. This is NADH-ubiquinone oxidoreductase chain 2 from Metachirus nudicaudatus (Brown four-eyed opossum).